The primary structure comprises 842 residues: Glycogen phosphorylase, muscle form (842 aa).

Serine 2 carries the post-translational modification N-acetylserine. Serine 15 is modified (phosphoserine; by PHK; in form phosphorylase A). AMP is bound by residues aspartate 43 and tyrosine 76. Phosphotyrosine occurs at positions 204 and 227. AMP is bound at residue 310–319 (RRFKSSKFGC). Residue serine 430 is modified to Phosphoserine. The residue at position 473 (tyrosine 473) is a Phosphotyrosine. The residue at position 681 (lysine 681) is an N6-(pyridoxal phosphate)lysine. Phosphoserine occurs at positions 747 and 748.

This sequence belongs to the glycogen phosphorylase family. As to quaternary structure, homodimer. Homotetramer; to form the enzymatically active phosphorylase A. Pyridoxal 5'-phosphate serves as cofactor. Post-translationally, phosphorylation of Ser-15 converts phosphorylase B (unphosphorylated) to phosphorylase A.

It carries out the reaction [(1-&gt;4)-alpha-D-glucosyl](n) + phosphate = [(1-&gt;4)-alpha-D-glucosyl](n-1) + alpha-D-glucose 1-phosphate. Allosterically regulated through the non-covalent binding of metabolites, being activated by AMP and inhibited by ATP, ADP, and glucose-6-phosphate. The activity is also controlled by post-translational modifications including phosphorylation. Allosteric enzyme that catalyzes the rate-limiting step in glycogen catabolism, the phosphorolytic cleavage of glycogen to produce glucose-1-phosphate, and plays a central role in maintaining cellular and organismal glucose homeostasis. In Bos taurus (Bovine), this protein is Glycogen phosphorylase, muscle form.